A 446-amino-acid chain; its full sequence is Phosphoglucosamine mutase (446 aa).

Catalysis depends on S101, which acts as the Phosphoserine intermediate. The Mg(2+) site is built by S101, D240, D242, and D244. The residue at position 101 (S101) is a Phosphoserine.

It belongs to the phosphohexose mutase family. Mg(2+) is required as a cofactor. In terms of processing, activated by phosphorylation.

The enzyme catalyses alpha-D-glucosamine 1-phosphate = D-glucosamine 6-phosphate. Functionally, catalyzes the conversion of glucosamine-6-phosphate to glucosamine-1-phosphate. The chain is Phosphoglucosamine mutase from Coxiella burnetii (strain CbuK_Q154) (Coxiella burnetii (strain Q154)).